The sequence spans 293 residues: uncharacterized protein (293 aa).

The active site involves Glu-47.

Belongs to the PhzF family.

This is an uncharacterized protein from Bacillus subtilis (strain 168).